The chain runs to 427 residues: Methylenetetrahydrofolate--tRNA-(uracil-5-)-methyltransferase TrmFO (427 aa).

6–11 (GAGLAG) is an FAD binding site.

The protein belongs to the MnmG family. TrmFO subfamily. Requires FAD as cofactor.

The protein resides in the cytoplasm. The enzyme catalyses uridine(54) in tRNA + (6R)-5,10-methylene-5,6,7,8-tetrahydrofolate + NADH + H(+) = 5-methyluridine(54) in tRNA + (6S)-5,6,7,8-tetrahydrofolate + NAD(+). It carries out the reaction uridine(54) in tRNA + (6R)-5,10-methylene-5,6,7,8-tetrahydrofolate + NADPH + H(+) = 5-methyluridine(54) in tRNA + (6S)-5,6,7,8-tetrahydrofolate + NADP(+). Functionally, catalyzes the folate-dependent formation of 5-methyl-uridine at position 54 (M-5-U54) in all tRNAs. The chain is Methylenetetrahydrofolate--tRNA-(uracil-5-)-methyltransferase TrmFO from Acholeplasma laidlawii (strain PG-8A).